The chain runs to 245 residues: 1-(5-phosphoribosyl)-5-[(5-phosphoribosylamino)methylideneamino] imidazole-4-carboxamide isomerase (245 aa).

The active-site Proton acceptor is the Asp-8. Asp-129 (proton donor) is an active-site residue.

This sequence belongs to the HisA/HisF family.

It localises to the cytoplasm. It carries out the reaction 1-(5-phospho-beta-D-ribosyl)-5-[(5-phospho-beta-D-ribosylamino)methylideneamino]imidazole-4-carboxamide = 5-[(5-phospho-1-deoxy-D-ribulos-1-ylimino)methylamino]-1-(5-phospho-beta-D-ribosyl)imidazole-4-carboxamide. Its pathway is amino-acid biosynthesis; L-histidine biosynthesis; L-histidine from 5-phospho-alpha-D-ribose 1-diphosphate: step 4/9. This Rhodopseudomonas palustris (strain ATCC BAA-98 / CGA009) protein is 1-(5-phosphoribosyl)-5-[(5-phosphoribosylamino)methylideneamino] imidazole-4-carboxamide isomerase.